Here is a 212-residue protein sequence, read N- to C-terminus: Thymidylate kinase (212 aa).

10-17 (GLEGAGKT) contributes to the ATP binding site.

This sequence belongs to the thymidylate kinase family.

The enzyme catalyses dTMP + ATP = dTDP + ADP. In terms of biological role, phosphorylation of dTMP to form dTDP in both de novo and salvage pathways of dTTP synthesis. The protein is Thymidylate kinase of Baumannia cicadellinicola subsp. Homalodisca coagulata.